A 147-amino-acid chain; its full sequence is Transthyretin (147 aa).

The first 20 residues, 1–20 (MASFRLFLLCLAGLVFVSEA), serve as a signal peptide directing secretion. A Sulfocysteine modification is found at cysteine 30. Lysine 35 serves as a coordination point for L-thyroxine. Residue glutamate 62 is modified to 4-carboxyglutamate. Residue serine 72 is modified to Phosphoserine. Glutamate 74 is a binding site for L-thyroxine. A glycan (N-linked (GlcNAc...) asparagine) is linked at asparagine 118. Serine 137 is an L-thyroxine binding site.

This sequence belongs to the transthyretin family. Homotetramer. Dimer of dimers. In the homotetramer, subunits assemble around a central channel that can accommodate two ligand molecules. Interacts with RBP4. Post-translationally, sulfonation of the reactive cysteine Cys-30 enhances the stability of the native conformation of TTR, avoiding misassembly of the protein leading to amyloid formation. Detected in serum (at protein level).

It is found in the secreted. Functionally, thyroid hormone-binding protein. Probably transports thyroxine from the bloodstream to the brain. This Bos taurus (Bovine) protein is Transthyretin (TTR).